A 263-amino-acid chain; its full sequence is Pro-opiomelanocortin (263 aa).

A signal peptide spans 1–26 (MLQPVWHACILAILGVFIFHVGEVRS). At glutamine 27 the chain carries Pyrrolidone carboxylic acid. Phenylalanine 87 is subject to Phenylalanine amide. N-linked (GlcNAc...) asparagine glycosylation occurs at asparagine 91. A propeptide spanning residues 107 to 141 (EDIANYPILNLFLGSDNQNTQEGIMEDDALDRQDS) is cleaved from the precursor. Valine 156 bears the Valine amide mark.

The protein belongs to the POMC family. Post-translationally, specific enzymatic cleavages at paired basic residues yield the different active peptides.

The protein resides in the secreted. In terms of biological role, stimulates the adrenal glands to release cortisol. Its function is as follows. Anorexigenic peptide. Increases the pigmentation of skin by increasing melanin production in melanocytes. Functionally, increases the pigmentation of skin by increasing melanin production in melanocytes. Endogenous orexigenic opiate. In terms of biological role, endogenous opiate. In Aquarana catesbeiana (American bullfrog), this protein is Pro-opiomelanocortin (pomc).